The following is a 275-amino-acid chain: Large ribosomal subunit protein uL2c (275 aa).

Residues Met-225–Lys-252 form a disordered region.

The protein belongs to the universal ribosomal protein uL2 family. In terms of assembly, part of the 50S ribosomal subunit.

The protein resides in the plastid. It localises to the chloroplast. The chain is Large ribosomal subunit protein uL2c (rpl2) from Guillardia theta (Cryptophyte).